Reading from the N-terminus, the 674-residue chain is Probable DNA helicase MCM9 (674 aa).

A C4-type zinc finger spans residues 165–198 (CRKCKCRFTVHPELEAGNRITLPASCKSKSAKGC). Residues 318 to 521 (GRNSILKGIC…KWDKIVSSHI (204 aa)) enclose the MCM domain. 368-375 (GDPGTGKS) contacts ATP. An Arginine finger motif is present at residues 497-500 (SRFD).

The protein belongs to the MCM family.

The protein localises to the nucleus. It carries out the reaction ATP + H2O = ADP + phosphate + H(+). In terms of biological role, probable DNA helicase that may play a role in DNA repair during meiosis. In Oryza sativa subsp. indica (Rice), this protein is Probable DNA helicase MCM9 (MCM9).